The chain runs to 113 residues: Mini zinc finger protein 3 (113 aa).

The segment at Tyr24–Val83 adopts a ZF-HD dimerization-type; degenerate zinc-finger fold. The disordered stretch occupies residues Asp93–Glu113. The span at Gly97–Glu113 shows a compositional bias: low complexity.

As to quaternary structure, homo- and heterodimers.

It is found in the cytoplasm. In terms of biological role, inhibits zinc finger homeodomain (ZHD) transcription factors, by interacting with them to prevent both their nuclear localization and their DNA-binding properties. The protein is Mini zinc finger protein 3 (MIF3) of Oryza sativa subsp. indica (Rice).